The following is a 1703-amino-acid chain: Pecanex-like protein 1 (1703 aa).

2 helical membrane-spanning segments follow: residues 31–53 and 57–74; these read VNALHLYIWLFLLCFPFTLYMAL and MVIVGIYCGVIAAMFLLL. Over residues 91–100 the composition is skewed to basic and acidic residues; that stretch reads VEHQTRESKG. The tract at residues 91-126 is disordered; the sequence is VEHQTRESKGSRGGTGGANDPVTRREDSNGLGDPGG. A glycan (N-linked (GlcNAc...) asparagine) is linked at Asn-256. Transmembrane regions (helical) follow at residues 416-438, 477-499, and 525-547; these read VLAVVLAVLVAFLGSVLLIHGFF, AYSRPVYFCLCCGLIWLLHYGSL, and LVIVFTLCFPIIFFVGLLPQVNT. Asn-564 is a glycosylation site (N-linked (GlcNAc...) asparagine). 4 helical membrane-spanning segments follow: residues 569–591, 603–622, 675–697, and 704–721; these read LLSALYSILRSIVTVALLYCFCY, IPVLFSVFCGLLVAVSYHLS, LIVCVVIAVLYFAIHVSTVFIAL, and VLYGLLGAVGLLTHYLLP. N-linked (GlcNAc...) asparagine glycosylation is found at Asn-988, Asn-1129, and Asn-1391. Disordered stretches follow at residues 1475–1556 and 1577–1598; these read VQSG…HSIP and TDPLSQHHHPHHHPQQHNPTHA. 2 stretches are compositionally biased toward low complexity: residues 1485–1510 and 1518–1556; these read ARASVVSQSSSYRYSSSRHSSLRTST and RSSTSQLSLRTLPTSLQLRLGSTSDPAGPSSSLSSHSIP. Positions 1582-1591 are enriched in basic residues; sequence QHHHPHHHPQ. The N-linked (GlcNAc...) asparagine glycan is linked to Asn-1622.

Belongs to the pecanex family.

Its subcellular location is the membrane. This chain is Pecanex-like protein 1, found in Takifugu rubripes (Japanese pufferfish).